The sequence spans 663 residues: Fructose-1,6-bisphosphatase class 3 1 (663 aa).

It belongs to the FBPase class 3 family. Mn(2+) is required as a cofactor.

It carries out the reaction beta-D-fructose 1,6-bisphosphate + H2O = beta-D-fructose 6-phosphate + phosphate. Its pathway is carbohydrate biosynthesis; gluconeogenesis. This chain is Fructose-1,6-bisphosphatase class 3 1, found in Clostridium beijerinckii (strain ATCC 51743 / NCIMB 8052) (Clostridium acetobutylicum).